Reading from the N-terminus, the 531-residue chain is Anthranilate synthase component 1 (531 aa).

Residues S56 and 284-286 (PYM) contribute to the L-tryptophan site. 324–325 (GS) serves as a coordination point for chorismate. Residue E351 coordinates Mg(2+). Residues Y439, R459, 473–475 (GGG), and G475 contribute to the chorismate site. E488 serves as a coordination point for Mg(2+). Residues 506–531 (LHNITPDSVSAPDSVSSPDSVTEANS) form a disordered region. Over residues 511–531 (PDSVSAPDSVSSPDSVTEANS) the composition is skewed to low complexity.

This sequence belongs to the anthranilate synthase component I family. Heterotetramer consisting of two non-identical subunits: a beta subunit (TrpG) and a large alpha subunit (TrpE). Mg(2+) is required as a cofactor.

The catalysed reaction is chorismate + L-glutamine = anthranilate + pyruvate + L-glutamate + H(+). Its pathway is amino-acid biosynthesis; L-tryptophan biosynthesis; L-tryptophan from chorismate: step 1/5. Its activity is regulated as follows. Feedback inhibited by tryptophan. Functionally, part of a heterotetrameric complex that catalyzes the two-step biosynthesis of anthranilate, an intermediate in the biosynthesis of L-tryptophan. In the first step, the glutamine-binding beta subunit (TrpG) of anthranilate synthase (AS) provides the glutamine amidotransferase activity which generates ammonia as a substrate that, along with chorismate, is used in the second step, catalyzed by the large alpha subunit of AS (TrpE) to produce anthranilate. In the absence of TrpG, TrpE can synthesize anthranilate directly from chorismate and high concentrations of ammonia. This is Anthranilate synthase component 1 (trpE) from Arthrobacter globiformis.